The primary structure comprises 278 residues: HTH-type transcriptional activator RhaS (278 aa).

Positions N174–G272 constitute an HTH araC/xylS-type domain. 2 DNA-binding regions (H-T-H motif) span residues D191–T212 and V239–F262.

In terms of assembly, binds DNA as a dimer.

The protein resides in the cytoplasm. Functionally, activates expression of the rhaBAD and rhaT operons. The protein is HTH-type transcriptional activator RhaS of Escherichia coli O157:H7.